The chain runs to 122 residues: Large ribosomal subunit protein bL12 (122 aa).

The protein belongs to the bacterial ribosomal protein bL12 family. Homodimer. Part of the ribosomal stalk of the 50S ribosomal subunit. Forms a multimeric L10(L12)X complex, where L10 forms an elongated spine to which 2 to 4 L12 dimers bind in a sequential fashion. Binds GTP-bound translation factors.

Forms part of the ribosomal stalk which helps the ribosome interact with GTP-bound translation factors. Is thus essential for accurate translation. The chain is Large ribosomal subunit protein bL12 from Streptococcus pneumoniae serotype 19F (strain G54).